We begin with the raw amino-acid sequence, 938 residues long: Isoleucine--tRNA ligase (938 aa).

Residues 58–68 (PYANGSIHIGH) carry the 'HIGH' region motif. The residue at position 183 (K183) is an N6-acetyllysine. An L-isoleucyl-5'-AMP-binding site is contributed by E561. The short motif at 602-606 (KMSKS) is the 'KMSKS' region element. K605 contacts ATP. Residues C901, C904, C921, and C924 each contribute to the Zn(2+) site.

Belongs to the class-I aminoacyl-tRNA synthetase family. IleS type 1 subfamily. In terms of assembly, monomer. Zn(2+) is required as a cofactor.

It localises to the cytoplasm. It catalyses the reaction tRNA(Ile) + L-isoleucine + ATP = L-isoleucyl-tRNA(Ile) + AMP + diphosphate. Catalyzes the attachment of isoleucine to tRNA(Ile). As IleRS can inadvertently accommodate and process structurally similar amino acids such as valine, to avoid such errors it has two additional distinct tRNA(Ile)-dependent editing activities. One activity is designated as 'pretransfer' editing and involves the hydrolysis of activated Val-AMP. The other activity is designated 'posttransfer' editing and involves deacylation of mischarged Val-tRNA(Ile). This Escherichia coli O17:K52:H18 (strain UMN026 / ExPEC) protein is Isoleucine--tRNA ligase.